The primary structure comprises 482 residues: MGSNPTPSASVLYMDLSFILKRVKGITLNSKEVKKGYLFFAIKGTRFDGHNFIREAEERGAYAVVVERPVSSKVPVIIVEDTRKALGKSAHEFFGKPSERLNVIGITGTNGKTTTTHLIEKILLEAGEKTGLIGTIYYRLGEKILGSGRTTPDQITWHRTLKEFYELGAKNVVAEISSHALDQYRVYPTRFEAVLFTNLSQDHLDYHKTMEDYFASKAKLFTEYESKVKIINADDTYGKRLLKITHGEIITYGKKGDLKILNFRTDFRGSALRIAFKGKEYEFSTNLIGDFQAYNLSAAIAYALWKGIEPDLIQRALKCVNVPGRFEVVHSDKFTVIIDYAHTPDAVENVLRTARKLSKGKLISVFGAGGNRDREKRPLMGKAAEKYSDLIILTSDNPRDEEPEKIIEDILDGISEKDKVIIEADRRKAIKKAIDMAKEGDMVAILGKGHEDYQEIKGVKYPFSDAQVVKEILGGDGCIGKD.

The UDP-N-acetyl-alpha-D-muramoyl-L-alanyl-D-glutamate site is built by L28 and S30. Position 108–114 (G108–T114) interacts with ATP. UDP-N-acetyl-alpha-D-muramoyl-L-alanyl-D-glutamate contacts are provided by residues T150–T151, S177, Q183, and R185. At K217 the chain carries N6-carboxylysine. Residues R372, D396–R399, G447, and E451 contribute to the meso-2,6-diaminopimelate site. The Meso-diaminopimelate recognition motif signature appears at D396 to R399.

Belongs to the MurCDEF family. MurE subfamily. Mg(2+) serves as cofactor. Post-translationally, carboxylation is probably crucial for Mg(2+) binding and, consequently, for the gamma-phosphate positioning of ATP.

The protein resides in the cytoplasm. The catalysed reaction is UDP-N-acetyl-alpha-D-muramoyl-L-alanyl-D-glutamate + meso-2,6-diaminopimelate + ATP = UDP-N-acetyl-alpha-D-muramoyl-L-alanyl-gamma-D-glutamyl-meso-2,6-diaminopimelate + ADP + phosphate + H(+). The protein operates within cell wall biogenesis; peptidoglycan biosynthesis. In terms of biological role, catalyzes the addition of meso-diaminopimelic acid to the nucleotide precursor UDP-N-acetylmuramoyl-L-alanyl-D-glutamate (UMAG) in the biosynthesis of bacterial cell-wall peptidoglycan. The chain is UDP-N-acetylmuramoyl-L-alanyl-D-glutamate--2,6-diaminopimelate ligase from Aquifex aeolicus (strain VF5).